The primary structure comprises 407 residues: Bifunctional enzyme IspD/IspF (407 aa).

The segment at 1–247 is 2-C-methyl-D-erythritol 4-phosphate cytidylyltransferase; the sequence is MVHIQADGAR…RLSHNALPDV (247 aa). Positions 248–407 are 2-C-methyl-D-erythritol 2,4-cyclodiphosphate synthase; sequence RTGNGYDVHQ…ATVVFQGKPQ (160 aa). The a divalent metal cation site is built by Asp254 and His256. Residues 254-256 and 280-281 each bind 4-CDP-2-C-methyl-D-erythritol 2-phosphate; these read DVH and HS. An a divalent metal cation-binding site is contributed by His288. 4-CDP-2-C-methyl-D-erythritol 2-phosphate-binding positions include 302–304, 378–381, Phe385, and Arg388; these read DIG and TTNE.

It in the N-terminal section; belongs to the IspD/TarI cytidylyltransferase family. IspD subfamily. This sequence in the C-terminal section; belongs to the IspF family. A divalent metal cation serves as cofactor.

It catalyses the reaction 2-C-methyl-D-erythritol 4-phosphate + CTP + H(+) = 4-CDP-2-C-methyl-D-erythritol + diphosphate. The catalysed reaction is 4-CDP-2-C-methyl-D-erythritol 2-phosphate = 2-C-methyl-D-erythritol 2,4-cyclic diphosphate + CMP. The protein operates within isoprenoid biosynthesis; isopentenyl diphosphate biosynthesis via DXP pathway; isopentenyl diphosphate from 1-deoxy-D-xylulose 5-phosphate: step 2/6. Its pathway is isoprenoid biosynthesis; isopentenyl diphosphate biosynthesis via DXP pathway; isopentenyl diphosphate from 1-deoxy-D-xylulose 5-phosphate: step 4/6. Bifunctional enzyme that catalyzes the formation of 4-diphosphocytidyl-2-C-methyl-D-erythritol from CTP and 2-C-methyl-D-erythritol 4-phosphate (MEP) (IspD), and catalyzes the conversion of 4-diphosphocytidyl-2-C-methyl-D-erythritol 2-phosphate (CDP-ME2P) to 2-C-methyl-D-erythritol 2,4-cyclodiphosphate (ME-CPP) with a corresponding release of cytidine 5-monophosphate (CMP) (IspF). The polypeptide is Bifunctional enzyme IspD/IspF (Allorhizobium ampelinum (strain ATCC BAA-846 / DSM 112012 / S4) (Agrobacterium vitis (strain S4))).